The primary structure comprises 360 residues: Carbamoyl phosphate synthase small chain (360 aa).

The tract at residues 1-169 is CPSase; sequence MTKRLLILED…TKTAYPAPGI (169 aa). L-glutamine contacts are provided by Ser-46, Gly-220, and Gly-222. Residues 172–358 enclose the Glutamine amidotransferase type-1 domain; it reads NIVLVDFGLK…LEMIDSWRCT (187 aa). The active-site Nucleophile is the Cys-247. Met-248, Gln-251, Asn-289, Gly-291, and Tyr-292 together coordinate L-glutamine. Catalysis depends on residues His-331 and Asp-333.

The protein belongs to the CarA family. In terms of assembly, composed of two chains; the small (or glutamine) chain promotes the hydrolysis of glutamine to ammonia, which is used by the large (or ammonia) chain to synthesize carbamoyl phosphate. Tetramer of heterodimers (alpha,beta)4.

It catalyses the reaction hydrogencarbonate + L-glutamine + 2 ATP + H2O = carbamoyl phosphate + L-glutamate + 2 ADP + phosphate + 2 H(+). The enzyme catalyses L-glutamine + H2O = L-glutamate + NH4(+). It participates in amino-acid biosynthesis; L-arginine biosynthesis; carbamoyl phosphate from bicarbonate: step 1/1. The protein operates within pyrimidine metabolism; UMP biosynthesis via de novo pathway; (S)-dihydroorotate from bicarbonate: step 1/3. Small subunit of the glutamine-dependent carbamoyl phosphate synthetase (CPSase). CPSase catalyzes the formation of carbamoyl phosphate from the ammonia moiety of glutamine, carbonate, and phosphate donated by ATP, constituting the first step of 2 biosynthetic pathways, one leading to arginine and/or urea and the other to pyrimidine nucleotides. The small subunit (glutamine amidotransferase) binds and cleaves glutamine to supply the large subunit with the substrate ammonia. In Streptococcus pyogenes serotype M18 (strain MGAS8232), this protein is Carbamoyl phosphate synthase small chain.